We begin with the raw amino-acid sequence, 509 residues long: ATP synthase subunit alpha (509 aa).

Gly-169–Thr-176 provides a ligand contact to ATP.

It belongs to the ATPase alpha/beta chains family. In terms of assembly, F-type ATPases have 2 components, CF(1) - the catalytic core - and CF(0) - the membrane proton channel. CF(1) has five subunits: alpha(3), beta(3), gamma(1), delta(1), epsilon(1). CF(0) has three main subunits: a(1), b(2) and c(9-12). The alpha and beta chains form an alternating ring which encloses part of the gamma chain. CF(1) is attached to CF(0) by a central stalk formed by the gamma and epsilon chains, while a peripheral stalk is formed by the delta and b chains.

Its subcellular location is the cell inner membrane. It catalyses the reaction ATP + H2O + 4 H(+)(in) = ADP + phosphate + 5 H(+)(out). In terms of biological role, produces ATP from ADP in the presence of a proton gradient across the membrane. The alpha chain is a regulatory subunit. The polypeptide is ATP synthase subunit alpha (Sinorhizobium medicae (strain WSM419) (Ensifer medicae)).